The primary structure comprises 395 residues: Subtilisin-like protease 5 (395 aa).

A signal peptide spans 1–19 (MGFLTVLYLSLAALSVTNA). A propeptide spanning residues 20 to 115 (AQIMSAPNGA…VEPDAIISQH (96 aa)) is cleaved from the precursor. The Inhibitor I9 domain occupies 36-112 (YIVVMKDDTS…VAFVEPDAII (77 aa)). In terms of domain architecture, Peptidase S8 spans 124 to 395 (PWGLSRLSNR…RRLLYNGSGR (272 aa)). Catalysis depends on charge relay system residues D155 and H186. N229 and N247 each carry an N-linked (GlcNAc...) asparagine glycan. The active-site Charge relay system is the S341. The disordered stretch occupies residues 374 to 395 (QPTIHNPGPDTTRRLLYNGSGR). N-linked (GlcNAc...) asparagine glycosylation is present at N391.

The protein belongs to the peptidase S8 family.

It is found in the secreted. Secreted subtilisin-like serine protease with keratinolytic activity that contributes to pathogenicity. This Arthroderma otae (strain ATCC MYA-4605 / CBS 113480) (Microsporum canis) protein is Subtilisin-like protease 5 (SUB5).